Consider the following 274-residue polypeptide: ATP synthase subunit a (274 aa).

The next 5 membrane-spanning stretches (helical) occupy residues Thr-43–Phe-63, Val-103–Leu-123, Val-144–Ile-164, Leu-223–Pro-243, and Ala-245–Val-265.

This sequence belongs to the ATPase A chain family. F-type ATPases have 2 components, CF(1) - the catalytic core - and CF(0) - the membrane proton channel. CF(1) has five subunits: alpha(3), beta(3), gamma(1), delta(1), epsilon(1). CF(0) has three main subunits: a(1), b(2) and c(9-12). The alpha and beta chains form an alternating ring which encloses part of the gamma chain. CF(1) is attached to CF(0) by a central stalk formed by the gamma and epsilon chains, while a peripheral stalk is formed by the delta and b chains.

The protein resides in the cell inner membrane. In terms of biological role, key component of the proton channel; it plays a direct role in the translocation of protons across the membrane. The protein is ATP synthase subunit a of Photorhabdus laumondii subsp. laumondii (strain DSM 15139 / CIP 105565 / TT01) (Photorhabdus luminescens subsp. laumondii).